Here is a 764-residue protein sequence, read N- to C-terminus: Complement factor B (764 aa).

A signal peptide spans 1 to 25 (MGSNLSPQLCLMPFILGLLSGGVTT). 3 consecutive Sushi domains span residues 35-100 (GSCS…ECRA), 101-160 (IHCP…ICDN), and 163-220 (GYCS…SCQD). 6 disulfides stabilise this stretch: C37/C76, C62/C98, C103/C145, C131/C158, C165/C205, and C191/C218. N-linked (GlcNAc...) asparagine glycosylation is found at N122 and N142. The 200-residue stretch at 270 to 469 (NIYLVLDGSD…NLEDVFFQMI (200 aa)) folds into the VWFA domain. The Mg(2+) site is built by S278 and S280. An N-linked (GlcNAc...) asparagine glycan is attached at N285. T353 is a Mg(2+) binding site. N378 is a glycosylation site (N-linked (GlcNAc...) asparagine). Positions 477-757 (LCGMVWEHRK…VLPWLKQKLQ (281 aa)) constitute a Peptidase S1 domain. 5 disulfide bridges follow: C478/C596, C511/C527, C599/C615, C656/C682, and C695/C725. Active-site charge relay system residues include H526 and D576. The active-site Charge relay system is S699.

This sequence belongs to the peptidase S1 family. Monomer. Interacts with complement C3b; this interaction is dependent on the presence of Mg(2+). In terms of assembly, catalytic component of the C3 convertase of the alternative complement pathway, also named C3bBb, composed of complement factor B Bb and complement C3b. Catalytic component of the C5 convertase of the alternative complement pathway, also named C3bBb3b, composed of complement factor B Bb and additional molecules of complement C3b. Interacts to CFP; this interaction contributes to the stabilization of the active C3-convertase enzyme complex. It depends on Mg(2+) as a cofactor. Mn(2+) is required as a cofactor. In terms of processing, cleaved by CFD following activation of the alternative complement system, generating Ba and Bb chains. Cleavage and activation takes place when CFB is already associated with complement C3b.

Its subcellular location is the secreted. The protein resides in the cell surface. The enzyme catalyses Cleavage of Arg-|-Ser bond in complement component C3 alpha-chain to yield C3a and C3b, and Arg-|-Xaa bond in complement component C5 alpha-chain to yield C5a and C5b.. Functionally, precursor of the catalytic component of the C3 and C5 convertase complexes of the alternative pathway of the complement system, a cascade of proteins that leads to phagocytosis and breakdown of pathogens and signaling that strengthens the adaptive immune system. The alternative complement pathway acts as an amplification loop that enhances other complement pathways (classical, lectin and GZMK) by promoting formation of additional C3 and C5 convertases. CFB is cleaved and activated by CFD to generate Ba and Bb chains; Bb chain constituting the catalytic component of the C3 and C5 convertases. In terms of biological role, serine protease component of the complement C3 and C5 convertase complexes of the alternative complement pathway. Following cleavage and activation by factor D (CFD), forms the C3 convertase together with complement C3b. As part of the C3 convertase, cleaves and activates C3 into C3a anaphylatoxin and C3b opsonin, the next components of the complement pathways. When an additional complement C3b molecule binds to the C3 convertase, forms the C5 convertase, which cleaves and activates C5 into C5a anaphylatoxin and C5b component of the membrane attack complex. Involved in proliferation and differentiation of preactivated B-lymphocytes, rapid spreading of peripheral blood monocytes, stimulation of lymphocyte blastogenesis and lysis of erythrocytes. This Pongo pygmaeus (Bornean orangutan) protein is Complement factor B (CFB).